The chain runs to 584 residues: Tyrosine-protein kinase Dnt (584 aa).

A signal peptide spans Met-1–Gly-40. Over Ser-41–Gly-208 the chain is Extracellular. The WIF domain maps to Val-49–Cys-180. Residues Asn-124, Asn-163, Asn-168, and Asn-183 are each glycosylated (N-linked (GlcNAc...) asparagine). The chain crosses the membrane as a helical span at residues Leu-209–Ile-229. The Cytoplasmic segment spans residues Ala-230–Val-584. The interval Gln-241 to His-261 is disordered. Polar residues predominate over residues Met-250–His-261. A Protein kinase domain is found at Val-317–Tyr-577. ATP is bound by residues Leu-323 to Val-331 and Lys-345. The active-site Proton acceptor is Asp-442. Tyr-472 is modified (phosphotyrosine; by autocatalysis).

It belongs to the protein kinase superfamily. Tyr protein kinase family. As to expression, expressed in dynamic domains in the embryonic epidermis, many of which border on sites of epithelial invagination into the embryo interior, including ventral furrow, cephalic furrow, fore- and hindgut, optic lobe and tracheal pits. Later in embryogenesis, expression is seen in imaginal tissues.

It is found in the cell membrane. It carries out the reaction L-tyrosyl-[protein] + ATP = O-phospho-L-tyrosyl-[protein] + ADP + H(+). In terms of biological role, may play an essential role in neuronal pathway recognition and ventral muscle attachment site selection. This Drosophila melanogaster (Fruit fly) protein is Tyrosine-protein kinase Dnt (dnt).